The primary structure comprises 607 residues: ATP-dependent RNA helicase dbp9 (607 aa).

The Q motif signature appears at 24 to 52 (ATFASLGLDARLLQGIAKQNFQSPTLVQS). The Helicase ATP-binding domain maps to 55-232 (IPLTLEGRDI…GLFCRNPEVL (178 aa)). ATP is bound at residue 68-75 (AKTGSGKT). Positions 180 to 183 (DEAD) match the DEAD box motif. The region spanning 243-475 (GVSQFVVKCA…EVKPYNFDMK (233 aa)) is the Helicase C-terminal domain. Disordered regions lie at residues 332–380 (VLGD…GKKD) and 580–607 (ARAANKAKGRGKGRKSDPLKTFKAKSRK). Residues 334–352 (GDEDEPKPEETEEVEADDA) show a composition bias toward acidic residues. Basic and acidic residues predominate over residues 353 to 368 (SGEKEDAKDAKKETKQ). Residues 580–592 (ARAANKAKGRGKG) show a composition bias toward basic residues.

Belongs to the DEAD box helicase family. DDX56/DBP9 subfamily.

The protein resides in the nucleus. It is found in the nucleolus. The enzyme catalyses ATP + H2O = ADP + phosphate + H(+). Its function is as follows. ATP-binding RNA helicase involved in the biogenesis of 60S ribosomal subunits and is required for the normal formation of 25S and 5.8S rRNAs. The chain is ATP-dependent RNA helicase dbp9 (dbp9) from Sclerotinia sclerotiorum (strain ATCC 18683 / 1980 / Ss-1) (White mold).